We begin with the raw amino-acid sequence, 311 residues long: JNK1/MAPK8-associated membrane protein (311 aa).

Topologically, residues 1–57 are lumenal; sequence MAVDIQPACLGLYCGKTLLFKNGSTEIYGECGVCPRGQRTNAQKYCQPCTESPELYD. N22 is a glycosylation site (N-linked (GlcNAc...) asparagine). A helical transmembrane segment spans residues 58–78; that stretch reads WLYLGFMAMLPLVLHWFFIEW. The Cytoplasmic portion of the chain corresponds to 79 to 87; it reads YSGKKSSSA. Residues 88-108 traverse the membrane as a helical segment; that stretch reads LFQHITALFECSMAAIITLLV. Topologically, residues 109–149 are lumenal; sequence SDPVGVLYIRSCRVLMLSDWYTMLYNPSPDYVTTVHCTHEA. The helical transmembrane segment at 150–170 threads the bilayer; the sequence is VYPLYTIVFIYYAFCLVLMML. The Cytoplasmic segment spans residues 171 to 188; it reads LRPLLVKKIACGLGKSDR. The chain crosses the membrane as a helical span at residues 189–209; it reads FKSIYAALYFFPILTVLQAVG. Position 210 (G210) is a topological domain, lumenal. The chain crosses the membrane as a helical span at residues 211–231; the sequence is GLLYYAFPYIILVLSLVTLAV. Residues 232 to 250 lie on the Cytoplasmic side of the membrane; that stretch reads YMSASEIENCYDLLVRKKR. The chain crosses the membrane as a helical span at residues 251 to 271; sequence LIVLFSHWLLHAYGIISISRV. Over 272 to 277 the chain is Lumenal; it reads DKLEQD. The chain crosses the membrane as a helical span at residues 278-298; sequence LPLLALVPTPALFYLFTAKFT. Over 299 to 311 the chain is Cytoplasmic; it reads EPSRILSEGANGH.

Interacts with RNF5 and MAPK8, but not with MAPK9. Binding to MAPK8 occurs before and after exposure to stress, such as UV irradiation. After exposure to stress, interacts with phosphorylated MAPK8. Competes with DUSP10 for MAPK8 binding. Associates with multiple components of the proteasome and with ERAD regulatory proteins including AMFR/GP78, CANX, PSMC1, PSMC2, PSMC3/TBP1, PSMC5, PSMC6, PSMD8, SEC61-ALPHA and UFD1. Interacts with DERL1 (in the presence of misfolded protein CFTR(F508del)). Ubiquitinated by RNF5 via 'Lys-63'-linked ubiquitin linkage in a UBE2N-dependent manner. Ubiquitination decreases association with components of the proteasome and ERAD.

The protein localises to the endoplasmic reticulum membrane. In terms of biological role, regulates the duration of MAPK8 activity in response to various stress stimuli. Facilitates degradation of misfolded endoplasmic reticulum (ER) proteins through the recruitment of components of the proteasome and endoplasmic reticulum-associated degradation (ERAD) system. This is JNK1/MAPK8-associated membrane protein (JKAMP) from Homo sapiens (Human).